The primary structure comprises 160 residues: MKAVCPGSFDPITLGHLDIVTRAAAQFSEVTILVTANPNKNSGLFTVAERMDLIRESTAHLDNVKVDTWASLLVDYTTEHGIGALVKGLRSSLDYEYELPMAQMNRRLTGVDTFFLLTDEKYGYVSSTLCKEVARFGGDVSGLLPEVVAKAVTEKYSNQH.

Residue Ser8 coordinates substrate. ATP-binding positions include 8 to 9 (SF) and His16. Substrate contacts are provided by Lys40, Leu73, and Lys87. Residues 88-90 (GLR), Glu98, and 122-128 (YGYVSST) contribute to the ATP site.

This sequence belongs to the bacterial CoaD family. As to quaternary structure, homohexamer. Mg(2+) serves as cofactor.

The protein localises to the cytoplasm. The enzyme catalyses (R)-4'-phosphopantetheine + ATP + H(+) = 3'-dephospho-CoA + diphosphate. Its pathway is cofactor biosynthesis; coenzyme A biosynthesis; CoA from (R)-pantothenate: step 4/5. Functionally, reversibly transfers an adenylyl group from ATP to 4'-phosphopantetheine, yielding dephospho-CoA (dPCoA) and pyrophosphate. This is Phosphopantetheine adenylyltransferase from Corynebacterium glutamicum (strain R).